The following is a 259-amino-acid chain: MNILAPVRRDRVLAELPQCLKKEAALHVRKDFHPRVTCACQEHRTGTVGFKISKVIVVGDLSVGKTCLINRFCKDTFDKNYKATIGVDFEMERFEVLGVPFSLQLWDTAGQERFKCIASTYYRGAQAIIIVFNLNDVASLEHTKQWLTDALKENDPSNVLLFLVGSKKDLSTPAQYSLMEKDALKVAQEIKAEYWAVSSLTGENVREFFFRVAALTFEANVLADVEKSGARHIADVVRINSDDKNLYLTASKKKATCCP.

At Met-1 the chain carries N-acetylmethionine. Residues Ser-62, Val-63, Gly-64, Lys-65, Thr-66, Asp-78, Tyr-81, and Thr-84 each coordinate GTP. Thr-66 is a binding site for Mg(2+). The short motif at 71–89 (RFCKDTFDKNYKATIGVDF) is the Switch 1 element. Thr-84 and Asp-107 together coordinate Mg(2+). The Switch 2 signature appears at 108 to 127 (TAGQERFKCIASTYYRGAQA). 4 residues coordinate GTP: Gly-110, Lys-167, Asp-169, and Ser-198. Phosphoserine is present on Ser-241. Residues Cys-257 and Cys-258 are each lipidated (S-geranylgeranyl cysteine).

Belongs to the small GTPase superfamily. Rab family. Interacts with RILP. The GTP-bound form interacts with REP15. Requires Mg(2+) as cofactor.

It is found in the cytoplasm. It localises to the golgi apparatus. The protein localises to the cytoplasmic vesicle. The protein resides in the phagosome. Its subcellular location is the phagosome membrane. It is found in the cell projection. It localises to the cilium. The protein localises to the cytoskeleton. The protein resides in the microtubule organizing center. Its subcellular location is the centrosome. It is found in the centriole. The enzyme catalyses GTP + H2O = GDP + phosphate + H(+). With respect to regulation, regulated by guanine nucleotide exchange factors (GEFs) which promote the exchange of bound GDP for free GTP. Regulated by GTPase activating proteins (GAPs) which increase the GTP hydrolysis activity. Inhibited by GDP dissociation inhibitors (GDIs). Its function is as follows. The small GTPases Rab are key regulators of intracellular membrane trafficking, from the formation of transport vesicles to their fusion with membranes. Rabs cycle between an inactive GDP-bound form and an active GTP-bound form that is able to recruit to membranes different sets of downstream effectors directly responsible for vesicle formation, movement, tethering and fusion. RAB34 transports protein involved in the redistribution of lysosomes to the peri-Golgi region. Plays a role in the maturation of phagosomes that engulf pathogens, such as S.aureus and M.tuberculosis. Plays a role in the fusion of phagosomes with lysosomes. Required for the early steps of intracellular ciliogenesis, the cilium assembly pathway initiated by trafficking and docking of ciliary vesicles to the centrioles in the cytoplasm, followed by axoneme formation in the cytoplasm. After axoneme elongation, the centrioles migrate close to the cell surface so that ciliary vesicles can fuse with the plasma membrane to expose cilia to the extracellular space. It seems dispensable for ciliogenesis via the extracellular pathway where cilium assembly begins after migration and docking of the centriole to the plasma membrane. Also acts as a positive regulator of hedgehog signaling and regulates ciliary function. This chain is Ras-related protein Rab-34, found in Mus musculus (Mouse).